The primary structure comprises 292 residues: Protoheme IX farnesyltransferase (292 aa).

A run of 9 helical transmembrane segments spans residues 13-33, 35-55, 84-104, 106-126, 135-155, 161-181, 206-226, 231-251, and 263-283; these read ILFG…QGSI, ILLL…GCVV, VALV…WFGV, GYAF…YSLW, TVIG…AVTH, ALLL…AIAI, IECV…YCFG, FFLI…IIGF, and FFLY…FTYQ.

Belongs to the UbiA prenyltransferase family. Protoheme IX farnesyltransferase subfamily.

Its subcellular location is the cell inner membrane. The enzyme catalyses heme b + (2E,6E)-farnesyl diphosphate + H2O = Fe(II)-heme o + diphosphate. The protein operates within porphyrin-containing compound metabolism; heme O biosynthesis; heme O from protoheme: step 1/1. Its function is as follows. Converts heme B (protoheme IX) to heme O by substitution of the vinyl group on carbon 2 of heme B porphyrin ring with a hydroxyethyl farnesyl side group. The protein is Protoheme IX farnesyltransferase of Acinetobacter baumannii (strain AB307-0294).